Reading from the N-terminus, the 515-residue chain is 1-pyrroline-5-carboxylate dehydrogenase (515 aa).

Residues Glu286 and Cys320 contribute to the active site.

This sequence belongs to the aldehyde dehydrogenase family. RocA subfamily.

The enzyme catalyses L-glutamate 5-semialdehyde + NAD(+) + H2O = L-glutamate + NADH + 2 H(+). Its pathway is amino-acid degradation; L-proline degradation into L-glutamate; L-glutamate from L-proline: step 2/2. The protein is 1-pyrroline-5-carboxylate dehydrogenase of Geobacillus sp. (strain WCH70).